The primary structure comprises 345 residues: UbiA prenyltransferase domain-containing protein 1 (345 aa).

The next 8 membrane-spanning stretches (helical) occupy residues 60-80 (LALR…GTAI), 90-110 (LLLF…GNLV), 141-161 (VRFG…LYFI), 169-189 (LALI…GIGF), 213-233 (AVQV…LALS), 251-273 (QAGI…YNLL), 285-305 (ATRY…AFSL), and 324-344 (LNLL…AGSL).

It belongs to the UbiA prenyltransferase family.

It localises to the endoplasmic reticulum membrane. The protein localises to the golgi apparatus membrane. It is found in the mitochondrion membrane. The enzyme catalyses menadiol + (2E,6E,10E)-geranylgeranyl diphosphate = menaquinol-4 + diphosphate. The catalysed reaction is all-trans-decaprenyl diphosphate + 4-hydroxybenzoate = 4-hydroxy-3-(all-trans-decaprenyl)benzoate + diphosphate. It participates in quinol/quinone metabolism; menaquinone biosynthesis. Its pathway is cofactor biosynthesis; ubiquinone biosynthesis. Functionally, prenyltransferase that mediates the formation of menaquinone-4 (MK-4) and coenzyme Q10. MK-4 is a vitamin K2 isoform required for endothelial cell development. Mediates the conversion of phylloquinone (PK) into MK-4, probably by cleaving the side chain of phylloquinone (PK) to release 2-methyl-1,4-naphthoquinone (menadione; K3) and then prenylating it with geranylgeranyl pyrophosphate (GGPP) to form MK-4. Also plays a role in cardiovascular development independently of MK-4 biosynthesis, by acting as a coenzyme Q10 biosynthetic enzyme: coenzyme Q10, also named ubiquinone, plays an important antioxidant role in the cardiovascular system. Mediates biosynthesis of coenzyme Q10 in the Golgi membrane, leading to protect cardiovascular tissues from NOS3/eNOS-dependent oxidative stress. The protein is UbiA prenyltransferase domain-containing protein 1 (ubiad1) of Xenopus tropicalis (Western clawed frog).